A 204-amino-acid chain; its full sequence is Dephospho-CoA kinase (204 aa).

The region spanning Val3–Gln200 is the DPCK domain. Gly11–Thr16 contacts ATP.

The protein belongs to the CoaE family.

It localises to the cytoplasm. The enzyme catalyses 3'-dephospho-CoA + ATP = ADP + CoA + H(+). It functions in the pathway cofactor biosynthesis; coenzyme A biosynthesis; CoA from (R)-pantothenate: step 5/5. Functionally, catalyzes the phosphorylation of the 3'-hydroxyl group of dephosphocoenzyme A to form coenzyme A. The sequence is that of Dephospho-CoA kinase from Aeromonas hydrophila.